We begin with the raw amino-acid sequence, 63 residues long: Light-harvesting protein B-800/850 alpha chain (63 aa).

The Cytoplasmic segment spans residues 1–14 (MNNAKMWLVVKPTV). A helical membrane pass occupies residues 15–35 (GIPLFLVACAIASFLVHLMLV). Residue histidine 31 participates in a bacteriochlorophyll binding. Topologically, residues 36–63 (LTTGWMGDYYSGSFEAASLVSNATTLLS) are periplasmic.

This sequence belongs to the antenna complex alpha subunit family. The core complex is formed by different alpha and beta chains, binding bacteriochlorophyll molecules, and arranged most probably in tetrameric structures disposed around the reaction center. The non-pigmented gamma chains may constitute additional components.

The protein localises to the cell inner membrane. Its function is as follows. Antenna complexes are light-harvesting systems, which transfer the excitation energy to the reaction centers. This Rhodovulum sulfidophilum (Rhodobacter sulfidophilus) protein is Light-harvesting protein B-800/850 alpha chain (pucA).